The following is a 216-amino-acid chain: Probable nicotinate-nucleotide adenylyltransferase (216 aa).

Belongs to the NadD family.

It carries out the reaction nicotinate beta-D-ribonucleotide + ATP + H(+) = deamido-NAD(+) + diphosphate. It functions in the pathway cofactor biosynthesis; NAD(+) biosynthesis; deamido-NAD(+) from nicotinate D-ribonucleotide: step 1/1. Functionally, catalyzes the reversible adenylation of nicotinate mononucleotide (NaMN) to nicotinic acid adenine dinucleotide (NaAD). The sequence is that of Probable nicotinate-nucleotide adenylyltransferase from Klebsiella pneumoniae (strain 342).